We begin with the raw amino-acid sequence, 476 residues long: Adenosylhomocysteinase (476 aa).

Positions 67, 142, and 202 each coordinate substrate. 203 to 205 (TTT) contacts NAD(+). Lys-232 and Asp-236 together coordinate substrate. Residues Asn-237, 266-271 (GYGDVG), Glu-289, Asn-324, 345-347 (IGH), and Asn-390 each bind NAD(+).

The protein belongs to the adenosylhomocysteinase family. NAD(+) is required as a cofactor.

Its subcellular location is the cytoplasm. The catalysed reaction is S-adenosyl-L-homocysteine + H2O = L-homocysteine + adenosine. Its pathway is amino-acid biosynthesis; L-homocysteine biosynthesis; L-homocysteine from S-adenosyl-L-homocysteine: step 1/1. In terms of biological role, may play a key role in the regulation of the intracellular concentration of adenosylhomocysteine. In Synechococcus sp. (strain CC9902), this protein is Adenosylhomocysteinase.